Reading from the N-terminus, the 436-residue chain is Ribulose bisphosphate carboxylase large chain (436 aa).

Substrate-binding residues include asparagine 104 and threonine 154. Catalysis depends on lysine 156, which acts as the Proton acceptor. Lysine 158 is a binding site for substrate. Residues lysine 182, aspartate 184, and glutamate 185 each contribute to the Mg(2+) site. Residue lysine 182 is modified to N6-carboxylysine. Residue histidine 275 is the Proton acceptor of the active site. Residues arginine 276, histidine 308, and serine 360 each contribute to the substrate site.

Belongs to the RuBisCO large chain family. Type I subfamily. In terms of assembly, heterohexadecamer of 8 large chains and 8 small chains. Mg(2+) serves as cofactor.

Its subcellular location is the plastid. The protein localises to the chloroplast. It carries out the reaction 2 (2R)-3-phosphoglycerate + 2 H(+) = D-ribulose 1,5-bisphosphate + CO2 + H2O. It catalyses the reaction D-ribulose 1,5-bisphosphate + O2 = 2-phosphoglycolate + (2R)-3-phosphoglycerate + 2 H(+). Functionally, ruBisCO catalyzes two reactions: the carboxylation of D-ribulose 1,5-bisphosphate, the primary event in carbon dioxide fixation, as well as the oxidative fragmentation of the pentose substrate in the photorespiration process. Both reactions occur simultaneously and in competition at the same active site. The chain is Ribulose bisphosphate carboxylase large chain from Euglena myxocylindracea.